Consider the following 199-residue polypeptide: Small ribosomal subunit protein uS4 (199 aa).

In terms of domain architecture, S4 RNA-binding spans 94–157 (SRLDNIVYRM…QNVPTILASI (64 aa)).

The protein belongs to the universal ribosomal protein uS4 family. Part of the 30S ribosomal subunit. Contacts protein S5. The interaction surface between S4 and S5 is involved in control of translational fidelity.

In terms of biological role, one of the primary rRNA binding proteins, it binds directly to 16S rRNA where it nucleates assembly of the body of the 30S subunit. With S5 and S12 plays an important role in translational accuracy. The sequence is that of Small ribosomal subunit protein uS4 from Mycoplasma mobile (strain ATCC 43663 / 163K / NCTC 11711) (Mesomycoplasma mobile).